A 219-amino-acid chain; its full sequence is tRNA (guanine-N(7)-)-methyltransferase (219 aa).

S-adenosyl-L-methionine is bound by residues Glu46, Glu71, Asp100, and Asp122. The active site involves Asp122. Lys126 contacts substrate. Residues 128-133 form an interaction with RNA region; it reads KHEKRR. Substrate contacts are provided by residues Asp158 and 199–202; that span reads TEYE.

Belongs to the class I-like SAM-binding methyltransferase superfamily. TrmB family.

It carries out the reaction guanosine(46) in tRNA + S-adenosyl-L-methionine = N(7)-methylguanosine(46) in tRNA + S-adenosyl-L-homocysteine. Its pathway is tRNA modification; N(7)-methylguanine-tRNA biosynthesis. Functionally, catalyzes the formation of N(7)-methylguanine at position 46 (m7G46) in tRNA. The protein is tRNA (guanine-N(7)-)-methyltransferase of Oenococcus oeni (strain ATCC BAA-331 / PSU-1).